Consider the following 115-residue polypeptide: Promotilin (115 aa).

A signal peptide spans 1-25; it reads MLSRKATAILLVVHAAAMLASQTEG. Positions 43 to 73 are disordered; it reads RYKGQKKSLSVQQRSEEVGPVDPAEPREEKQ.

Belongs to the motilin family.

The protein resides in the secreted. Plays an important role in the regulation of interdigestive gastrointestinal motility and indirectly causes rhythmic contraction of duodenal and colonic smooth muscle. The protein is Promotilin (MLN) of Ovis aries (Sheep).